The chain runs to 170 residues: Cysteine-rich venom protein VAR4 (170 aa).

Residues 1 to 22 (MILLKLYLTLAAILCQSRGTTS) form the signal peptide. Residues 41–169 (NKHNDLRRTV…PLKYFLVCQY (129 aa)) enclose the SCP domain. Disulfide bonds link Cys-77–Cys-156, Cys-95–Cys-170, and Cys-151–Cys-167.

Belongs to the CRISP family. Contains 8 disulfide bonds. As to expression, expressed by the venom gland.

Its subcellular location is the secreted. Functionally, blocks ryanodine receptors, and potassium channels. The sequence is that of Cysteine-rich venom protein VAR4 from Varanus acanthurus (Ridge-tailed monitor).